Consider the following 257-residue polypeptide: Protein KlaA (257 aa).

Its function is as follows. Belongs to the kla operon, which is associated with cryptic tellurite resistance, and IncW plasmid fertility inhibition. This Escherichia coli protein is Protein KlaA (klaA).